The chain runs to 748 residues: Serine/threonine-protein kinase CG17528 (748 aa).

Composition is skewed to polar residues over residues 22–35 (QASP…SVPS) and 47–59 (EKTN…QEDN). Disordered stretches follow at residues 22-41 (QASP…NVVT) and 47-81 (EKTN…ELDD). 6 positions are modified to phosphoserine: Ser-67, Ser-70, Ser-73, Ser-87, Ser-88, and Ser-89. A Phosphothreonine modification is found at Thr-91. The residue at position 93 (Ser-93) is a Phosphoserine. Phosphothreonine is present on Thr-100. Doublecortin domains follow at residues 158–244 (LRIK…VEYN) and 313–396 (RIVT…AEDF). Residues 477–735 (YSLGRIIGDG…SEDILDHSWT (259 aa)) enclose the Protein kinase domain. ATP contacts are provided by residues 483–491 (IGDGNFAIV) and Lys-506. The active-site Proton acceptor is Asp-598.

The protein belongs to the protein kinase superfamily. CAMK Ser/Thr protein kinase family. CaMK subfamily.

The catalysed reaction is L-seryl-[protein] + ATP = O-phospho-L-seryl-[protein] + ADP + H(+). It carries out the reaction L-threonyl-[protein] + ATP = O-phospho-L-threonyl-[protein] + ADP + H(+). The chain is Serine/threonine-protein kinase CG17528 from Drosophila melanogaster (Fruit fly).